Reading from the N-terminus, the 401-residue chain is Chalcone synthase 3 (401 aa).

C168 is an active-site residue.

Belongs to the thiolase-like superfamily. Chalcone/stilbene synthases family.

It catalyses the reaction (E)-4-coumaroyl-CoA + 3 malonyl-CoA + 3 H(+) = 2',4,4',6'-tetrahydroxychalcone + 3 CO2 + 4 CoA. The protein operates within secondary metabolite biosynthesis; flavonoid biosynthesis. The primary product of this enzyme is 4,2',4',6'-tetrahydroxychalcone (also termed naringenin-chalcone or chalcone) which can under specific conditions spontaneously isomerize into naringenin. The polypeptide is Chalcone synthase 3 (CHS3) (Sorghum bicolor (Sorghum)).